Reading from the N-terminus, the 215-residue chain is Ribose-5-phosphate isomerase A (215 aa).

Substrate is bound by residues T26 to T29, D79 to D82, and K92 to G95. E101 (proton acceptor) is an active-site residue. Substrate is bound at residue K119.

It belongs to the ribose 5-phosphate isomerase family. As to quaternary structure, homodimer.

The enzyme catalyses aldehydo-D-ribose 5-phosphate = D-ribulose 5-phosphate. It functions in the pathway carbohydrate degradation; pentose phosphate pathway; D-ribose 5-phosphate from D-ribulose 5-phosphate (non-oxidative stage): step 1/1. Catalyzes the reversible conversion of ribose-5-phosphate to ribulose 5-phosphate. The chain is Ribose-5-phosphate isomerase A from Xanthomonas oryzae pv. oryzae (strain MAFF 311018).